A 486-amino-acid chain; its full sequence is Protein DETOXIFICATION 16 (486 aa).

12 helical membrane passes run 35–55 (GPLIAVSLLQFCLQVISVMFV), 68–88 (IATSFASVTGFSFLMGTASAL), 117–137 (LASIPLSIIWANTEHLLVFFG), 142–162 (IATLAGSYAKFMIPSIFAYGL), 179–199 (VVFCSGVTTSLHVLLCWVLVF), 207–227 (GAALANSISYWLNVVLLFCYV), 259–279 (ALMVCLEMWSFELLVLLSGLL), 288–308 (VLSICLNTSGTMWMIPFGLSG), 331–351 (RVVICIAVAESIVIGSVLILI), 365–385 (VVSYVASMMPILALGNFLDSL), 401–421 (IGAIINLGSYYLVGVPSGLLL), and 433–453 (WLGIICALVVQVFGLGLVTIF).

It belongs to the multi antimicrobial extrusion (MATE) (TC 2.A.66.1) family.

The protein resides in the membrane. The chain is Protein DETOXIFICATION 16 from Arabidopsis thaliana (Mouse-ear cress).